The chain runs to 161 residues: Arachidonate 5-lipoxygenase-activating protein (161 aa).

Residues 1–8 are Lumenal-facing; the sequence is MDQEAVGN. A helical transmembrane segment spans residues 9–30; sequence VVLLAIVTLISVVQNAFFAHKV. The Cytoplasmic segment spans residues 31 to 52; the sequence is ELESKAQSGRSFQRTGTLAFER. A helical transmembrane segment spans residues 53-77; the sequence is VYTANQNCVDAYPTFLVVLWTAGLL. Over 78-80 the chain is Lumenal; sequence CSQ. Residues 81–102 form a helical membrane-spanning segment; sequence VPAAFAGLMYLFVRQKYFVGYL. Over 103 to 107 the chain is Cytoplasmic; it reads GERTQ. An intramembrane segment occupies 108–115; sequence STPGYIFG. The chain crosses the membrane as a helical span at residues 116 to 128; it reads KRIILFLFLMSLA. The Lumenal segment spans residues 129–161; the sequence is GILNHYLIFFFGSDFENYIRTITTTISPLLLIP.

This sequence belongs to the MAPEG family. Homotrimer. Interacts with LTC4S and ALOX5.

Its subcellular location is the nucleus membrane. It is found in the endoplasmic reticulum membrane. Its function is as follows. Required for leukotriene biosynthesis by ALOX5 (5-lipoxygenase). Anchors ALOX5 to the membrane. Binds arachidonic acid, and could play an essential role in the transfer of arachidonic acid to ALOX5. Binds to MK-886, a compound that blocks the biosynthesis of leukotrienes. In Rattus norvegicus (Rat), this protein is Arachidonate 5-lipoxygenase-activating protein (Alox5ap).